The following is a 1208-amino-acid chain: Neural cell adhesion molecule L1-like protein (1208 aa).

The first 24 residues, 1 to 24 (MEPLLLGRGLIVYLMFLLLKFSKA), serve as a signal peptide directing secretion. Residues 25-1082 (IEIPSSVQQV…LYDDISTQGW (1058 aa)) are Extracellular-facing. 2 consecutive Ig-like C2-type domains span residues 35–124 (PTII…EEIE) and 128–223 (PSVP…MKLT). 2 disulfides stabilise this stretch: C57–C109 and C153–C204. N-linked (GlcNAc...) asparagine glycans are attached at residues K231 and N299. Ig-like C2-type domains are found at residues 235–328 (PKLL…VIVE), 331–417 (PRWT…ANID), 423–510 (PLIQ…ANLD), and 515–607 (TKLR…TQVT). 4 cysteine pairs are disulfide-bonded: C262–C310, C352–C401, C445–C494, and C536–C591. N-linked (GlcNAc...) asparagine glycosylation is found at N476 and N482. The DGEA motif lies at 555-558 (DGEA). 2 N-linked (GlcNAc...) asparagine glycosylation sites follow: N562 and N580. 4 consecutive Fibronectin type-III domains span residues 614–709 (PPEN…TPPA), 714–807 (NPQN…SGED), 809–914 (PDTA…TPEG), and 918–1015 (QPTF…LGEG). Residues 693-716 (GRSQPSQPSDHHETPPAAPDRNPQ) form a disordered region. 4 N-linked (GlcNAc...) asparagine glycosylation sites follow: N767, N822, N945, and N1026. Residues 1083-1103 (FIGLMCAIALLTLLLLTVCFV) traverse the membrane as a helical segment. Topologically, residues 1104–1208 (KRNRGGKYSV…SSTATFPLRA (105 aa)) are cytoplasmic. Residues 1131–1163 (ETFGEYSDSDEKPLKGSLRSLNRDMQPTESADS) form a disordered region. Residues S1147, S1160, and S1180 each carry the phosphoserine modification. Over residues 1149–1161 (RSLNRDMQPTESA) the composition is skewed to polar residues. Positions 1181–1185 (FIGAY) match the FIG[AQ]Y motif. Positions 1189 to 1208 (KEKGSVESNGSSTATFPLRA) are disordered. Positions 1194 to 1208 (VESNGSSTATFPLRA) are enriched in polar residues.

The protein belongs to the immunoglobulin superfamily. L1/neurofascin/NgCAM family. As to quaternary structure, may interact with L1CAM. May interact with ITGB1/ITGA1 heterodimer and ITGB1/ITGA2 heterodimer as well as with ANK3. In terms of processing, cleavage by metalloprotease ADAM8 in the extracellular part generates 2 soluble forms (125 kDa and 165 kDa) in vitro and is inhibited by metalloprotease inhibitors. Cleaved by BACE1. Post-translationally, N-glycosylated. Contains N-linked oligosaccharides with a sulfated carbohydrate structure type HNK-1 (SO4-3-GlcUABeta1,3GalBeta1,4GlcNAc). O-glycosylated. As to expression, expressed in the fetal and adult brain as well as in Schwann cell culture. Also detected in adult peripheral tissues.

The protein resides in the cell membrane. Its subcellular location is the secreted. It is found in the extracellular space. The protein localises to the extracellular matrix. Extracellular matrix and cell adhesion protein that plays a role in nervous system development and in synaptic plasticity. Both soluble and membranous forms promote neurite outgrowth of cerebellar and hippocampal neurons and suppress neuronal cell death. Plays a role in neuronal positioning of pyramidal neurons and in regulation of both the number of interneurons and the efficacy of GABAergic synapses. May play a role in regulating cell migration in nerve regeneration and cortical development. Potentiates integrin-dependent cell migration towards extracellular matrix proteins. Recruits ANK3 to the plasma membrane. This Homo sapiens (Human) protein is Neural cell adhesion molecule L1-like protein (CHL1).